A 130-amino-acid chain; its full sequence is Holo-[acyl-carrier-protein] synthase (130 aa).

Residues aspartate 9 and glutamate 58 each coordinate Mg(2+).

It belongs to the P-Pant transferase superfamily. AcpS family. Mg(2+) is required as a cofactor.

It is found in the cytoplasm. It carries out the reaction apo-[ACP] + CoA = holo-[ACP] + adenosine 3',5'-bisphosphate + H(+). Its function is as follows. Transfers the 4'-phosphopantetheine moiety from coenzyme A to a Ser of acyl-carrier-protein. This is Holo-[acyl-carrier-protein] synthase from Mycolicibacterium smegmatis (strain ATCC 700084 / mc(2)155) (Mycobacterium smegmatis).